The chain runs to 435 residues: S-phase entry cyclin-5 (435 aa).

2 disordered regions span residues 36-70 and 104-126; these read KRAL…NPLS and NDRT…DAAS. The segment covering 41-52 has biased composition (low complexity); that stretch reads KNDSSSKQQVQD. Over residues 110-124 the composition is skewed to acidic residues; that stretch reads EQEEEEEEEGEDDDA.

It belongs to the cyclin family. Cyclin AB subfamily.

Its function is as follows. Required for efficient progression through S phase and possibly for the normal progression through meiosis. Interacts with CDC28. In Saccharomyces cerevisiae (strain ATCC 204508 / S288c) (Baker's yeast), this protein is S-phase entry cyclin-5 (CLB5).